A 292-amino-acid polypeptide reads, in one-letter code: uncharacterized protein (292 aa).

10 helical membrane-spanning segments follow: residues 6 to 26, 32 to 52, 68 to 88, 94 to 114, 123 to 143, 147 to 167, 182 to 202, 214 to 234, 242 to 262, and 265 to 285; these read LGII…KVGI, LLFS…ILFI, IIMS…GMQF, TSVL…FSLN, MGLV…MLNI, ALFG…ANVF, AWHL…FEAV, SLLF…FWVL, ASMA…LQLH, and ITIN…MNTF. EamA domains are found at residues 13 to 137 and 159 to 285; these read LIWG…FIFG and LSWG…MNTF.

Belongs to the EamA transporter family.

Its subcellular location is the cell membrane. This is an uncharacterized protein from Bacillus subtilis (strain 168).